The sequence spans 509 residues: MNENKDTDSKKSEEYEDDFEKDLEWLINENEKSDASIIEMACEKEENINQDLKENETVMEHTKRHSDPDKSLQDEVSPRRNDIISVPGIQPLDPISDSDSENSFQESKLESQKDLEEEEDEEVRRYIMEKIVQANKLLQNQEPVNDKRERKLKFKDQLVDLEVPPLEDTTTFKNYFENERNMFGKLSQLCISNDFGQEDVLLSLTNGSCEENKDRTILVERDGKFELLNLQDIASQGFLPPINNANSTENDPQQLLPRSSNSSVSGTKKEDSTAKIHAVTHSSTGEPLAYIAQPPLNRKTCPSSAVNSDRSKGNGKSNHRTQSAHISPVTSTYCLSPRQKELQKQLEEKREKLKREEERRKIEEEKEKKRENDIVFKAWLQKKREQVLEMRRIQRAKEIEDMNSRQENRDPQQAFRLWLKKKHEEQMKERQTEELRKQEECLFFLKGTEGRERAFKQWLRRKRMEKMAEQQAVRERTRQLRLEAKRSKQLQHHLYMSEAKPFRFTDHYN.

A compositionally biased stretch (basic and acidic residues) spans 46 to 82 (ENINQDLKENETVMEHTKRHSDPDKSLQDEVSPRRND). Disordered stretches follow at residues 46-120 (ENIN…EEED) and 241-367 (PINN…EEKE). 2 stretches are compositionally biased toward polar residues: residues 243–266 (NNAN…SVSG) and 300–334 (TCPS…STYC). Positions 335–375 (LSPRQKELQKQLEEKREKLKREEERRKIEEEKEKKRENDIV) form a coiled coil. Over residues 338 to 367 (RQKELQKQLEEKREKLKREEERRKIEEEKE) the composition is skewed to basic and acidic residues.

This sequence belongs to the CCDC181 family. Homodimer. Interacts with HOOK1. Interacts with HOOK2. Interacts with HOOK3.

It is found in the cytoplasm. The protein localises to the cytoskeleton. The protein resides in the cell projection. Its subcellular location is the cilium. It localises to the flagellum. Microtubule-binding protein that localizes to the microtubular manchette of elongating spermatids. The sequence is that of Coiled-coil domain-containing protein 181 from Homo sapiens (Human).